The following is a 100-amino-acid chain: Urease subunit gamma (100 aa).

This sequence belongs to the urease gamma subunit family. Heterotrimer of UreA (gamma), UreB (beta) and UreC (alpha) subunits. Three heterotrimers associate to form the active enzyme.

The protein resides in the cytoplasm. The enzyme catalyses urea + 2 H2O + H(+) = hydrogencarbonate + 2 NH4(+). It functions in the pathway nitrogen metabolism; urea degradation; CO(2) and NH(3) from urea (urease route): step 1/1. In Methylocella silvestris (strain DSM 15510 / CIP 108128 / LMG 27833 / NCIMB 13906 / BL2), this protein is Urease subunit gamma.